Consider the following 70-residue polypeptide: Large ribosomal subunit protein uL29 (70 aa).

Belongs to the universal ribosomal protein uL29 family.

In Clostridium botulinum (strain ATCC 19397 / Type A), this protein is Large ribosomal subunit protein uL29.